We begin with the raw amino-acid sequence, 429 residues long: Histidine--tRNA ligase (429 aa).

This sequence belongs to the class-II aminoacyl-tRNA synthetase family. In terms of assembly, homodimer.

The protein resides in the cytoplasm. The enzyme catalyses tRNA(His) + L-histidine + ATP = L-histidyl-tRNA(His) + AMP + diphosphate + H(+). This chain is Histidine--tRNA ligase, found in Streptococcus pneumoniae (strain P1031).